The chain runs to 703 residues: MNDNLDLFSGAAPAAPESGAAPDKVLAKVQALRAQLNQWAHEYYVLDTPTVPDGEYDRVFQQLQALEGAYPELVTPDSPTQRVIGAVLDGLMPVRHAVPMLSIRTETDNEATGAEAFDARIRKELELAEGAPPVEYVAEPKFDGLAMNLRYENGRLVQATTRGDGEVGEDVTHNIRTIRKIPLSLPEGKGVPPVVEVRGEVYMGRADFVKLNERQQAAGGKSFANPRNAAAGSVRQLDSGIAAQRPLSFFAYGLGEITPAAQGGPDFVTHYAMLQTLRDWGFPVAPQVCIAKGAAELVAFHQRMGAERATLPYEIDGVVYKVNSLAQQRQLGFVSREPRWAVAHKYPAEEMPTRMEGIDIQVGRTGKLTPVARLAPVAVGGVIVTNATLHNLFEIRKKRVRTGDTVVVRRAGDVIPEVVGRVPGDRPAYVPNFRMPAACPICGSAVARPKGEANHRCTGGLFCPAQRKEAILHFAARRAMDIEGLGDKLVDQLVDGHVVRTLPDLYRLGLVALASLDRMAEKSAQNVLDALEKSKKTTLSRFLFGLGIRQVGESTAKDLARHFGQLDAIMDASVEQLLQVRDVGPIVAESIHTFFAQPHNREVVEQLRACGVHWEEGAAREQTAQPLAGMTVVLTGTLPTLGRDQAKEMLEAAGAKVSGSVSKKTSYVVAGAEAGSKLAKAEELGVTVLDEAGMLALLAGGDR.

The disordered stretch occupies residues 1 to 20 (MNDNLDLFSGAAPAAPESGA). The segment covering 9-20 (SGAAPAAPESGA) has biased composition (low complexity). Residues 53 to 57 (DGEYD), 102 to 103 (SI), and Glu139 contribute to the NAD(+) site. Residue Lys141 is the N6-AMP-lysine intermediate of the active site. Arg162, Glu200, Lys321, and Lys345 together coordinate NAD(+). Positions 439, 442, 457, and 463 each coordinate Zn(2+). One can recognise a BRCT domain in the interval 622–703 (QTAQPLAGMT…MLALLAGGDR (82 aa)).

The protein belongs to the NAD-dependent DNA ligase family. LigA subfamily. Mg(2+) serves as cofactor. Mn(2+) is required as a cofactor.

The catalysed reaction is NAD(+) + (deoxyribonucleotide)n-3'-hydroxyl + 5'-phospho-(deoxyribonucleotide)m = (deoxyribonucleotide)n+m + AMP + beta-nicotinamide D-nucleotide.. Functionally, DNA ligase that catalyzes the formation of phosphodiester linkages between 5'-phosphoryl and 3'-hydroxyl groups in double-stranded DNA using NAD as a coenzyme and as the energy source for the reaction. It is essential for DNA replication and repair of damaged DNA. This Delftia acidovorans (strain DSM 14801 / SPH-1) protein is DNA ligase.